The primary structure comprises 473 residues: ATP synthase subunit beta (473 aa).

156–163 (GGAGVGKT) lines the ATP pocket.

This sequence belongs to the ATPase alpha/beta chains family. As to quaternary structure, F-type ATPases have 2 components, CF(1) - the catalytic core - and CF(0) - the membrane proton channel. CF(1) has five subunits: alpha(3), beta(3), gamma(1), delta(1), epsilon(1). CF(0) has three main subunits: a(1), b(2) and c(9-12). The alpha and beta chains form an alternating ring which encloses part of the gamma chain. CF(1) is attached to CF(0) by a central stalk formed by the gamma and epsilon chains, while a peripheral stalk is formed by the delta and b chains.

The protein resides in the cell inner membrane. The enzyme catalyses ATP + H2O + 4 H(+)(in) = ADP + phosphate + 5 H(+)(out). In terms of biological role, produces ATP from ADP in the presence of a proton gradient across the membrane. The catalytic sites are hosted primarily by the beta subunits. The chain is ATP synthase subunit beta from Desulfovibrio desulfuricans (strain ATCC 27774 / DSM 6949 / MB).